We begin with the raw amino-acid sequence, 546 residues long: CTP synthase (546 aa).

Positions 1-266 are amidoligase domain; the sequence is MTTRYIFVTG…DDLVVKRFGL (266 aa). Position 14 (Ser-14) interacts with CTP. Residue Ser-14 participates in UTP binding. ATP-binding positions include 15–20 and Asp-72; that span reads SLGKGI. Mg(2+) contacts are provided by Asp-72 and Glu-140. Residues 147-149, 187-192, and Lys-223 contribute to the CTP site; these read DIE and KTKPTQ. UTP contacts are provided by residues 187 to 192 and Lys-223; that span reads KTKPTQ. An ATP-binding site is contributed by 239 to 241; sequence KDV. Residues 291-542 form the Glutamine amidotransferase type-1 domain; sequence VIGMVGKYIE…VAAASAHQKR (252 aa). Gly-352 is an L-glutamine binding site. Residue Cys-379 is the Nucleophile; for glutamine hydrolysis of the active site. Residues 380 to 383, Glu-403, and Arg-470 each bind L-glutamine; that span reads LGMQ. Catalysis depends on residues His-515 and Glu-517.

This sequence belongs to the CTP synthase family. Homotetramer.

The catalysed reaction is UTP + L-glutamine + ATP + H2O = CTP + L-glutamate + ADP + phosphate + 2 H(+). The enzyme catalyses L-glutamine + H2O = L-glutamate + NH4(+). It carries out the reaction UTP + NH4(+) + ATP = CTP + ADP + phosphate + 2 H(+). It participates in pyrimidine metabolism; CTP biosynthesis via de novo pathway; CTP from UDP: step 2/2. Its activity is regulated as follows. Allosterically activated by GTP, when glutamine is the substrate; GTP has no effect on the reaction when ammonia is the substrate. The allosteric effector GTP functions by stabilizing the protein conformation that binds the tetrahedral intermediate(s) formed during glutamine hydrolysis. Inhibited by the product CTP, via allosteric rather than competitive inhibition. In terms of biological role, catalyzes the ATP-dependent amination of UTP to CTP with either L-glutamine or ammonia as the source of nitrogen. Regulates intracellular CTP levels through interactions with the four ribonucleotide triphosphates. The chain is CTP synthase from Shewanella sp. (strain MR-4).